The sequence spans 80 residues: Protein FAM229B (80 aa).

The segment at 1–44 (MPFRFGTQPRRFPVEGGDSSIGLEPGLSSSATCNGKEMSPTRQL) is disordered.

It belongs to the FAM229 family.

This is Protein FAM229B (FAM229B) from Bos taurus (Bovine).